The primary structure comprises 272 residues: Small ribosomal subunit protein uS2 (272 aa).

The segment at 244–272 (EDDYEGAEGDLDLDSANEEESLEDNNEEE) is disordered.

It belongs to the universal ribosomal protein uS2 family.

In Trichodesmium erythraeum (strain IMS101), this protein is Small ribosomal subunit protein uS2.